Reading from the N-terminus, the 1730-residue chain is Nebulin-related-anchoring protein (1730 aa).

An LIM zinc-binding domain is found at 4-64 (QPCSRCGYGV…HAHNPKNNTF (61 aa)). 44 Nebulin repeats span residues 63–97 (TFTSVYHTPLNLNVRTFPEAISGIHDQEDGEQCKS), 156–166 (EYTEDYEQPRG), 175–202 (TPAYQRAKKANQLASQVEYKRGHDERIS), 203–237 (RFSTVVDTPELLRSKAGAQLQSDVRYTEDYEQQRG), 246–273 (TPAYQIAKRANELASDVRYHQQYQKEMR), 298–307 (YPEEYEEHRG), 316–343 (TPAYQNAKKAHELASDIKYRQDFNKMKG), 348–382 (HSLPAQDNLVLKQAQSVNKLVSEVEYKKDLESSRG), 389–417 (ETPQFRNVSKISKFTSDNKYKENYQNHMR), 419–453 (RYEGVGMDRRTLHAMKVGSLASNVAYKADYKHDIV), 487–521 (KYSSVTDTPQIVQAKINAQQLSHVNYRADYEKNKL), 522–556 (NYTLPQDVPQLVKAKTNAKLFSEVKYKEGWEKTKG), 558–592 (GFEMKLDAMSLLAAKASGELASNIKYKEEYEKTKG), 602–626 (LLHSLQIAKMSSEVEYKKGFEESKT), 627–661 (RFHLPMDMVNIRHAKKAQTLASDLDYRKKLHEYTV), 662–692 (LPEDMKTQWAKKAYGLQSELQYKADLAWMKG), 702–724 (NLEQAKKAGQLVSEKNYRQRVDE), 726–760 (KFTSVTDSSQMEHAKKSQELQSGVAYKAGNEQSVH), 761–795 (QYTISKDEPLFLQARANAANLSEKLYKSSWENQKA), 797–831 (GFELRLDSLTFLAAKAKRDLASEVKYKEDYERSRG), 844–869 (QMSHSLQMSKLQSELEYKKGFEDTKS), 870–896 (QCHVSLDMVHLVHARKAQHLATDVGYK), 901–935 (HFTALPTDMKVEWAKKAYGLQSDNQYRADVKWMKG), 945–963 (NVEQAKKAGELISEKKYRQ), 969–1003 (KFTSIKDTPEMVQARISYTQAVDRLYREQGENIKH), 1004–1038 (HYTPTADLPEVLLAKLNAMNISETRYKESWSKLRD), 1040–1074 (GYKLRLDALPFQAAKASGEIISDYKYKEAFEKMKG), 1078–1112 (GSRSLEDDISLAHSVYATSLQSDVNYKKGFEHSKA), 1113–1139 (QFHLPLDMAALVHAKKAQTLASNQDYK), 1144–1178 (QYTSLAEDLRLSCAKKAHKLQSENLYRSDLNFMRG), 1183–1206 (IPGTLEIEGRKKASELISESKYRQ), 1212–1246 (KYTAVTDTPNLLHAKFSNQITNERLYKAAGEDARH), 1247–1281 (EYTMTLGLPEFIRAKTNAANLSDARYKESWRNLRA), 1283–1317 (GYKLTIEALPFQAARASGDIASDFLYRHDFVKERG), 1321–1355 (GPQSVRDDPRIQHCRRMGQLQSELQYRRGATSSQA), 1356–1390 (QFHLPMDMVHLVHAKNAQALASDHDYRTQYHKFTA), 1391–1421 (LPEDLKMAWAKKAHALQSELRYKSDLIGMKG), 1429–1449 (SPQMESAKKAGELISETKYRK), 1455–1481 (KFTTVVDSPDLVHAKNSYMHCNERMYR), 1490–1524 (RYTLIPDHPDFTRARLNALHLSDKVYRNSWEQTRA), 1526–1560 (SYDFRLDAIPFQTARASREIASDFRYKEAFLRDRG), 1564–1598 (GYRSVDDDPRMKHFLNVGRLQSDNEYKKDFAKSRS), 1599–1626 (QFHSSTDQPGLLQAKRSQQLASDVHYRQ), and 1640–1664 (LRHAQKAHQLQSDVKYKSDLNLTRG). Ser-1081 carries the post-translational modification Phosphoserine. The disordered stretch occupies residues 1595-1620 (KSRSQFHSSTDQPGLLQAKRSQQLAS). Polar residues predominate over residues 1596–1606 (SRSQFHSSTDQ).

As to quaternary structure, interacts with actin, alpha-actinin, KLHL41, TLN1 and VCL. Interacts with CSRP3. In terms of tissue distribution, expressed in cardiac and skeletal muscle.

Its function is as follows. May be involved in anchoring the terminal actin filaments in the myofibril to the membrane and in transmitting tension from the myofibrils to the extracellular matrix. The protein is Nebulin-related-anchoring protein of Homo sapiens (Human).